The sequence spans 154 residues: 6,7-dimethyl-8-ribityllumazine synthase (154 aa).

5-amino-6-(D-ribitylamino)uracil is bound by residues F21, 55–57 (AFE), and 79–81 (CVI). 84–85 (AT) serves as a coordination point for (2S)-2-hydroxy-3-oxobutyl phosphate. Residue H87 is the Proton donor of the active site. A 5-amino-6-(D-ribitylamino)uracil-binding site is contributed by F112. R126 is a (2S)-2-hydroxy-3-oxobutyl phosphate binding site.

The protein belongs to the DMRL synthase family. Forms an icosahedral capsid composed of 60 subunits, arranged as a dodecamer of pentamers.

The catalysed reaction is (2S)-2-hydroxy-3-oxobutyl phosphate + 5-amino-6-(D-ribitylamino)uracil = 6,7-dimethyl-8-(1-D-ribityl)lumazine + phosphate + 2 H2O + H(+). Its pathway is cofactor biosynthesis; riboflavin biosynthesis; riboflavin from 2-hydroxy-3-oxobutyl phosphate and 5-amino-6-(D-ribitylamino)uracil: step 1/2. Catalyzes the formation of 6,7-dimethyl-8-ribityllumazine by condensation of 5-amino-6-(D-ribitylamino)uracil with 3,4-dihydroxy-2-butanone 4-phosphate. This is the penultimate step in the biosynthesis of riboflavin. The polypeptide is 6,7-dimethyl-8-ribityllumazine synthase (Staphylococcus aureus (strain MRSA252)).